Consider the following 188-residue polypeptide: Transcription factor FapR (188 aa).

Belongs to the FapR family.

Functionally, transcriptional factor involved in regulation of membrane lipid biosynthesis by repressing genes involved in fatty acid and phospholipid metabolism. This chain is Transcription factor FapR, found in Bacillus velezensis (strain DSM 23117 / BGSC 10A6 / LMG 26770 / FZB42) (Bacillus amyloliquefaciens subsp. plantarum).